The sequence spans 151 residues: Ribonuclease H (151 aa).

The region spanning 1–141 is the RNase H type-1 domain; sequence MQEVTVYSDG…ADALANKGVE (141 aa). Positions 9, 47, 69, and 133 each coordinate Mg(2+).

The protein belongs to the RNase H family. Monomer. Mg(2+) serves as cofactor.

It is found in the cytoplasm. It catalyses the reaction Endonucleolytic cleavage to 5'-phosphomonoester.. Endonuclease that specifically degrades the RNA of RNA-DNA hybrids. In Ralstonia nicotianae (strain ATCC BAA-1114 / GMI1000) (Ralstonia solanacearum), this protein is Ribonuclease H.